Here is an 86-residue protein sequence, read N- to C-terminus: DNA replication protein 1 (86 aa).

A coiled-coil region spans residues 38–67; it reads LELEKKMTKLEHENKLMKNALYELSRMENN.

This sequence belongs to the phi29likevirus DNA replication protein 1 family. Homomultimer. Self-associates into large complexes forming long filamentous structures. Interacts (via N-terminus) with the primer terminal protein. Interacts with host FtsZ protein.

The protein localises to the host membrane. Its function is as follows. Protein that assembles into highly ordered structures and provides a specific site for viral DNA replication. Probably anchors the viral DNA replisome to the host membrane. This Bacillus subtilis (Bacteriophage phi-29) protein is DNA replication protein 1 (1).